The sequence spans 559 residues: Complement component receptor 1-like protein (559 aa).

Positions 1 to 35 (MEASSPLDPVGRLVAFCRGGVHLAVLLLFLSPSTL) are cleaved as a signal peptide. 7 consecutive Sushi domains span residues 36 to 96 (GQCP…VCIR), 97 to 158 (KQCE…ICES), 159 to 229 (IPCE…QCIE), 231 to 290 (NKCT…SCFK), 292 to 354 (KSCG…VCEQ), 355 to 415 (VICK…KCVS), and 417 to 477 (VICK…KCVS). Topologically, residues 36-482 (GQCPAPPLFP…PKCVSRSNSG (447 aa)) are extracellular. 14 cysteine pairs are disulfide-bonded: Cys38-Cys81, Cys68-Cys94, Cys99-Cys140, Cys126-Cys156, Cys161-Cys210, Cys190-Cys227, Cys233-Cys275, Cys261-Cys288, Cys294-Cys336, Cys322-Cys352, Cys357-Cys400, Cys386-Cys413, Cys419-Cys462, and Cys448-Cys475. Residue Thr53 is glycosylated (O-linked (GalNAc...) threonine). An N-linked (GlcNAc...) asparagine glycan is attached at Asn331. A helical membrane pass occupies residues 483 to 503 (LIAGIFIGIIVLILFIIFSYW). The Cytoplasmic portion of the chain corresponds to 504–559 (MIMKFKKRNSTNEKCKEVGIYLNSKEDSCVQPQSLLTSQENNSTSSPARNSLTQEV). Phosphoserine occurs at positions 527, 531, and 537. The disordered stretch occupies residues 535-559 (PQSLLTSQENNSTSSPARNSLTQEV). Thr540 carries the phosphothreonine modification. Phosphoserine is present on Ser554.

Belongs to the receptors of complement activation (RCA) family. Interacts with C3b.

It is found in the membrane. Acts as a cofactor for complement factor I, a serine protease which protects autologous cells against complement-mediated injury by cleaving C3b and C4b deposited on host tissue. Also acts as a decay-accelerating factor, preventing the formation of C4b2a and C3bBb, the amplification convertases of the complement cascade. Seems to act as a costimulatory factor for T-cells. May play a crucial role in early embryonic development by maintaining fetomaternal tolerance. This Rattus norvegicus (Rat) protein is Complement component receptor 1-like protein (Cr1l).